The following is a 505-amino-acid chain: Probable glycine dehydrogenase (decarboxylating) subunit 2 (505 aa).

N6-(pyridoxal phosphate)lysine is present on lysine 274.

It belongs to the GcvP family. C-terminal subunit subfamily. The glycine cleavage system is composed of four proteins: P, T, L and H. In this organism, the P 'protein' is a heterodimer of two subunits. Requires pyridoxal 5'-phosphate as cofactor.

The catalysed reaction is N(6)-[(R)-lipoyl]-L-lysyl-[glycine-cleavage complex H protein] + glycine + H(+) = N(6)-[(R)-S(8)-aminomethyldihydrolipoyl]-L-lysyl-[glycine-cleavage complex H protein] + CO2. Its function is as follows. The glycine cleavage system catalyzes the degradation of glycine. The P protein binds the alpha-amino group of glycine through its pyridoxal phosphate cofactor; CO(2) is released and the remaining methylamine moiety is then transferred to the lipoamide cofactor of the H protein. This chain is Probable glycine dehydrogenase (decarboxylating) subunit 2, found in Sulfurisphaera tokodaii (strain DSM 16993 / JCM 10545 / NBRC 100140 / 7) (Sulfolobus tokodaii).